Consider the following 1117-residue polypeptide: Cytospin-A (1117 aa).

Disordered regions lie at residues 1-176 (MKKA…NQIS), 293-323 (SLSPEITPGNQSDGGGTLTSSVEGSAPGSVE), and 358-390 (SSDDALDAPSSSESEGIPSIERSRKGSSGNASE). Residues 45-90 (TAASLSKTKSSDDLLAGMAGGVTVTNGVKGKKSTCPSAAPSASAPA) show a composition bias toward low complexity. Over residues 93–117 (TVENKSKISTGTASSTKRSTSTGNK) the composition is skewed to polar residues. Basic and acidic residues-rich tracts occupy residues 120 to 131 (SSTRERLRERTR) and 158 to 171 (TATECDVRMSKSKS). Residues 168–280 (KSKSDNQISD…LNALGFSLEQ (113 aa)) are a coiled coil. Over residues 293–303 (SLSPEITPGNQ) the composition is skewed to polar residues. Low complexity predominate over residues 358–377 (SSDDALDAPSSSESEGIPSI). Ser384, Ser385, and Ser389 each carry phosphoserine. Coiled coils occupy residues 394-449 (ACLT…MESL) and 487-807 (RYME…RGRV). Phosphoserine is present on residues Ser868, Ser881, and Ser887. The interval 920–997 (TSSASRPASL…PTTRSRIREE (78 aa)) is disordered. Over residues 946–956 (RSSEEVKRDIS) the composition is skewed to basic and acidic residues. A compositionally biased stretch (low complexity) spans 971–990 (TTSPQLSLSSSPTASVTPTT). The 106-residue stretch at 1011–1116 (GSKRNALLKW…YVTAIYKYFE (106 aa)) folds into the Calponin-homology (CH) domain.

Belongs to the cytospin-A family. As to quaternary structure, may interact with both microtubules and actin cytoskeleton.

The protein resides in the cytoplasm. It localises to the cytoskeleton. It is found in the spindle. The protein localises to the cell junction. Its subcellular location is the gap junction. In terms of biological role, involved in cytokinesis and spindle organization. May play a role in actin cytoskeleton organization and microtubule stabilization and hence required for proper cell adhesion and migration. The chain is Cytospin-A (SPECC1L) from Homo sapiens (Human).